A 275-amino-acid chain; its full sequence is Arylamine N-acetyltransferase (275 aa).

The active-site Acyl-thioester intermediate is the Cys70. Active-site residues include His110 and Asp127.

Belongs to the arylamine N-acetyltransferase family. As to quaternary structure, homodimer and homotetramer.

The catalysed reaction is an arylamine + acetyl-CoA = an N-acetylarylamine + CoA. Catalyzes the transfer of the acetyl group from acetyl coenzyme A to the free amino group of arylamines and hydrazines. Substrates include isoniazid, anisidine, and 4-aminoveratrole, and to a much lesser extent, p-aminobenzoic acid. In Mycolicibacterium smegmatis (Mycobacterium smegmatis), this protein is Arylamine N-acetyltransferase.